An 804-amino-acid polypeptide reads, in one-letter code: MSLKRKNNAREGTPDEDLEEYSDYSDVDNYGEEDDDSYKPAPRIRINNNKTKAQTTTNSNEARQSGISAMFGQNDFSNLLGLKLDHTARPLWINPIDGRIILEAFSPLAEQAIDFLVTISEPVSRPAFIHEYRITAYSLYAAVSVGLKTEDIIAVLDRLSKTPIPPSIVDFIRACTVSYGKVKLVLKKNRYFIESGDASVLRLLLRDPVIGPLRIDYSTQSSKQKSSKPSNEDNVEDKKDITNDSSKETAEKSSSDELFSAVVGLQEEEDDEDAVHLFEIKHSSVETIKKRCAEIDYPLLEEYDFRNDNINPDLPIDLKPSTQIRPYQEKSLSKMFGNGRARSGIIVLPCGAGKTLVGITAACTIKKSVIVLCTSSVSVMQWRQQFLQWSNIKPDHIAVFTADHKERFHSEAGVVVSTYSMVANTRNRSYDSQKMMDFLTGREWGFILLDEVHVVPAAMFRRVVTTIAAHTKLGLTATLVREDDKIDDLNFLIGPKMYEANWMDLAQKGHIAKVQCAEVWCAMTTEFYNEYLRENSRKRMLLYIMNPKKFQACQFLIDYHEKRGDKIIVFSDNVYALRAYAIKLGKYFIYGGTPQQERMRILENFQYNELVNTIFLSKVGDTSIDLPEATCLIQISSHYGSRRQEAQRLGRILRAKRRNDEGFNAFFYSLVSKDTQEMYYSSKRQAFLIDQGYAFKVITNLKGMENLPNLAYASKAERLELLQEVLLQNEEAADLDDGEDTSFGSRSLSRAPAKAKRSSGSLSTLAGADNMAYVEYNKSANKQLKKDSKEHHALFRKHLYTKRR.

Disordered stretches follow at residues 1–61 (MSLK…NSNE) and 220–255 (QSSK…KSSS). The span at 14–36 (PDEDLEEYSDYSDVDNYGEEDDD) shows a compositional bias: acidic residues. 2 stretches are compositionally biased toward low complexity: residues 47–60 (NNNK…TNSN) and 220–229 (QSSKQKSSKP). Residues 236 to 255 (EDKKDITNDSSKETAEKSSS) show a composition bias toward basic and acidic residues. Residues 335–497 (MFGNGRARSG…DLNFLIGPKM (163 aa)) form the Helicase ATP-binding domain. Residue 348 to 355 (LPCGAGKT) coordinates ATP. The short motif at 450-453 (DEVH) is the DEVH box element. The Helicase C-terminal domain maps to 551 to 705 (QACQFLIDYH…KVITNLKGME (155 aa)). Disordered regions lie at residues 736 to 761 (DDGE…SSGS) and 782 to 804 (KQLK…TKRR). The span at 784–793 (LKKDSKEHHA) shows a compositional bias: basic and acidic residues. Residues 794–804 (LFRKHLYTKRR) show a composition bias toward basic residues.

Belongs to the helicase family. RAD25/XPB subfamily. Component of the 7-subunit TFIIH core complex composed of XPB/ptr8, XPD/rad15, ssl1, tfb1, tfb2, tfb4 and tfb5, which is active in NER. The core complex associates with the 3-subunit CTD-kinase module TFIIK composed of mcs2/cyclin H, mcs6/cdk7 and pmh1/tfb3 to form the 10-subunit holoenzyme (holo-TFIIH) active in transcription.

It is found in the nucleus. It catalyses the reaction Couples ATP hydrolysis with the unwinding of duplex DNA by translocating in the 3'-5' direction.. It carries out the reaction ATP + H2O = ADP + phosphate + H(+). In terms of biological role, probable ATP-dependent 3'-5' DNA helicase/translocase. Binds dsDNA rather than ssDNA, unzipping it in a translocase rather than classical helicase activity. Component of the general transcription and DNA repair factor IIH (TFIIH) core complex. When complexed to CDK-activating kinase (CAK), involved in RNA transcription by RNA polymerase II. Also involved in transcription-coupled nucleotide excision repair (NER) of damaged DNA. In NER, TFIIH acts by opening DNA around the lesion to allow the excision of the damaged oligonucleotide and its replacement by a new DNA fragment. The ATPase activity of XPB/ptr8, but not its helicase activity, is required for DNA opening. In transcription, TFIIH has an essential role in transcription initiation. When the pre-initiation complex (PIC) has been established, TFIIH is required for promoter opening and promoter escape. The ATP-dependent helicase activity of XPB/ptr8 is required for promoter escape but not for promoter opening. Plays a role in mRNA export. The sequence is that of General transcription and DNA repair factor IIH helicase/translocase subunit XPB from Schizosaccharomyces pombe (strain 972 / ATCC 24843) (Fission yeast).